Consider the following 854-residue polypeptide: MQENNINDLVASASRVIAPLWPIFTFAAHHPWMGLEKQSFEQVANWLKEARNVDIYPSASMIHSAKAKGEIEESFLQMSLSRWLDSQSFHIPREKAERFCQAALKLEKLPSSLLSSPEVNKLAEEMNYINTASMQASVMQPISSLIESQNSENLSDVLNYHIIKWCKLYLDESGSNWTMPNREKGFYRAWQHLITFDPALSKNERKVLKNWPQDAEVALARALSELGISESNIQSYLEGHLLSLPGWAGMIRWRSQQSIQEQELLIEYLAVRISMELAIVKPYLPLKNQKVEKKVSIVPLIASWIYWGNISTREWLQMPAAEQSELLAFAYRFDENIRRKLWLEAWEQTHAEQLREKIASTQRATNDKKRVLAQLAFCIDVRSEPFRRHLEKLGPFETFGIAGFFGLPIATSELGSNNNHPSLPVILKPKHQIKELTNENELKSYEQRKRVGSSVRYTFKTMKQNVMTSMALPELSGPLLGLQMVTRSFVPRGVGGFIRKLRKTMLQKPDTTFSLNHVHDTKGEIPIGFTKEEKVNYVRQALKIVGLTEKFAPLVVMCGHSSQSTNNPYAAALECGACGGAAGGFNARVFATLCNLPEVREALFAEGIKIPKDTIFAAAEHKTTVDELEWIYVPELSETAQEAFDCIESIMPNVSQHANRERLTQLPNFKTKIKNASKEAHRFAEDWSEIRPEWGLARNASFIIGQRELTQDCDLEGRAFLHNYDWKQDESGDILANIIAGPGTVAQWINLQYYASTVAPHYYGSGNKTTQTVTAGLGVMQGNASDLLPGLPWQSVMQSDSETYHSPLRLLIVIQAPSQYIERLLNNDFTFREKVQNGWVRLASVDPKGHWKNW.

Zn(2+)-binding residues include cysteine 378, aspartate 380, histidine 560, and cysteine 575.

The protein belongs to the inorganic carbon transporter (TC 9.A.2) DabA family. As to quaternary structure, forms a complex with DabB. Zn(2+) serves as cofactor.

It localises to the cell membrane. Its function is as follows. Part of an energy-coupled inorganic carbon pump. The polypeptide is Probable inorganic carbon transporter subunit DabA (Bacillus cereus (strain ATCC 14579 / DSM 31 / CCUG 7414 / JCM 2152 / NBRC 15305 / NCIMB 9373 / NCTC 2599 / NRRL B-3711)).